The sequence spans 231 residues: Endonuclease NucS (231 aa).

It belongs to the NucS endonuclease family.

It is found in the cytoplasm. Functionally, cleaves both 3' and 5' ssDNA extremities of branched DNA structures. The polypeptide is Endonuclease NucS (Pseudarthrobacter chlorophenolicus (strain ATCC 700700 / DSM 12829 / CIP 107037 / JCM 12360 / KCTC 9906 / NCIMB 13794 / A6) (Arthrobacter chlorophenolicus)).